Reading from the N-terminus, the 245-residue chain is 4-hydroxy-tetrahydrodipicolinate reductase (245 aa).

Residues 7 to 12 (GARGKV), 75 to 77 (GTT), and 102 to 105 (APNF) each bind NAD(+). His132 functions as the Proton donor/acceptor in the catalytic mechanism. Residue His133 participates in (S)-2,3,4,5-tetrahydrodipicolinate binding. Lys136 functions as the Proton donor in the catalytic mechanism. Residue 142-143 (GT) participates in (S)-2,3,4,5-tetrahydrodipicolinate binding.

This sequence belongs to the DapB family.

It localises to the cytoplasm. It carries out the reaction (S)-2,3,4,5-tetrahydrodipicolinate + NAD(+) + H2O = (2S,4S)-4-hydroxy-2,3,4,5-tetrahydrodipicolinate + NADH + H(+). It catalyses the reaction (S)-2,3,4,5-tetrahydrodipicolinate + NADP(+) + H2O = (2S,4S)-4-hydroxy-2,3,4,5-tetrahydrodipicolinate + NADPH + H(+). The protein operates within amino-acid biosynthesis; L-lysine biosynthesis via DAP pathway; (S)-tetrahydrodipicolinate from L-aspartate: step 4/4. Its function is as follows. Catalyzes the conversion of 4-hydroxy-tetrahydrodipicolinate (HTPA) to tetrahydrodipicolinate. The polypeptide is 4-hydroxy-tetrahydrodipicolinate reductase (Mycolicibacterium smegmatis (strain ATCC 700084 / mc(2)155) (Mycobacterium smegmatis)).